Here is a 251-residue protein sequence, read N- to C-terminus: Fibroblast growth factor 23 (251 aa).

A signal peptide spans 1 to 24 (MLGARLRLWVCALCSVCSMSVLRA). A disulfide bridge connects residues Cys-95 and Cys-113. O-linked (GalNAc) threonine glycosylation is found at Thr-171 and Thr-178. Positions 172–221 (PIPRRHTRSAEDDSERDPLNVLKPRARMTPAPASCSQELPSAEDNSPMAS) are disordered. Phosphoserine; by FAM20C is present on Ser-180. A compositionally biased stretch (polar residues) spans 205–219 (SCSQELPSAEDNSPM).

The protein belongs to the heparin-binding growth factors family. As to quaternary structure, interacts with FGFR1, FGFR2, FGFR3 and FGFR4. Affinity between fibroblast growth factors (FGFs) and their receptors is increased by KL and heparan sulfate glycosaminoglycans that function as coreceptors. Following secretion this protein is inactivated by cleavage into a N-terminal fragment and a C-terminal fragment. The processing is effected by proprotein convertases. Post-translationally, O-glycosylated at Thr-171 and Thr-178 by GALNT3 and glycosylation of Thr-178 requires previous glycosylation at Thr171. Glycosylation is necessary for secretion; it blocks processing by proprotein convertases when the O-glycan is alpha 2,6-sialylated. Competition between proprotein convertase cleavage and block of cleavage by O-glycosylation determines the level of secreted active FGF23. In terms of processing, phosphorylation at Ser-180 mediated by FAM20C slows down glycosylation at Thr-178 notably. As to expression, expressed in osteogenic cells particularly during phases of active bone remodeling. In adult trabecular bone, expressed in osteocytes and flattened bone-lining cells (inactive osteoblasts).

The protein resides in the secreted. Functionally, regulator of phosphate homeostasis. Inhibits renal tubular phosphate transport by reducing SLC34A1 levels. Up-regulates EGR1 expression in the presence of KL. Acts directly on the parathyroid to decrease PTH secretion. Regulator of vitamin-D metabolism. Negatively regulates osteoblast differentiation and matrix mineralization. In Homo sapiens (Human), this protein is Fibroblast growth factor 23 (FGF23).